The following is a 934-amino-acid chain: Serine/threonine-protein kinase PknD (934 aa).

In terms of domain architecture, Protein kinase spans 4-296 (YELIRLIGRG…ELRKALQPHL (293 aa)). ATP is bound by residues 10–18 (IGRGGMGEV) and Lys33. Catalysis depends on Asp138, which acts as the Proton acceptor.

It belongs to the protein kinase superfamily. Ser/Thr protein kinase family. In terms of processing, autophosphorylated on serine and threonine residues.

It catalyses the reaction L-seryl-[protein] + ATP = O-phospho-L-seryl-[protein] + ADP + H(+). It carries out the reaction L-threonyl-[protein] + ATP = O-phospho-L-threonyl-[protein] + ADP + H(+). Functionally, together with the serine/threonine kinase Pkn1, may play a role in the specific interactions with host proteins during intracellular growth. In Chlamydia muridarum (strain MoPn / Nigg), this protein is Serine/threonine-protein kinase PknD.